The chain runs to 495 residues: MRYYEEDANVTDSPNRNAAPKLIPTIKLGSQDNHDMMWNEDFHLTITNMAKKYGAIYALETGKTTLIALNDHNAVREALVNQSDVFNIRADLEILQVAPQKHFLELEAGELWSLHRKTFATAMRDYFRDRWDTMDQWLVTEIDDIEAAWKSQGDQAVFDPNRDISIKLASFLHRVMFDRRFGEFEESVFDEKSLSWLPAGFINSTRYELMPEHNKESYYAHYGDVIEKFASNLNGLDAYVSMNVLKEKECYNKGQYRHLTDFLLNACDDIPNDVKQQVGATEKEIIIGSLTQVAGAGGGVGAFALRWMLLYLASFPEKQKQVHAELDQVIGQNETPQQSHKGDLHYTQAFIAEVLRHCSITSMPASNYAASKDTFIDGYFVAKGTPLIVNNYGMTRDEALWENPDEFIPERFLEADGTFSKKQQAKSFPFGIGQRRCLGELFGKFLINTLFTHLAHRFEFSLPNNEPINLRAISGVFLVPEKVDIKAKSRSLSDS.

C437 is a binding site for heme.

It belongs to the cytochrome P450 family. Heme serves as cofactor.

Its function is as follows. Cytochrome P450 protein involved in the biosynthesis of polybrominated aromatic organic compounds. In the presence of ferredoxin, ferredoxin reductase and NADH, catalyzes the coupling of bromophenols and bromopyrroles, forming various polybrominated biphenyls and hydroxylated polybrominated diphenyl ethers (OH-BDE). Can also mediate the heterocoupling of 3,5-dibromocatechol, forming six different compounds, including polybrominated dibenzo-p-dioxins, which are among the most toxic molecules known to man. The sequence is that of Polybrominated aromatic compounds synthase from Marinomonas mediterranea (strain ATCC 700492 / JCM 21426 / NBRC 103028 / MMB-1).